Here is a 348-residue protein sequence, read N- to C-terminus: Phosphate acyltransferase (348 aa).

Belongs to the PlsX family. As to quaternary structure, homodimer. Probably interacts with PlsY.

It localises to the cytoplasm. The catalysed reaction is a fatty acyl-[ACP] + phosphate = an acyl phosphate + holo-[ACP]. It participates in lipid metabolism; phospholipid metabolism. Its function is as follows. Catalyzes the reversible formation of acyl-phosphate (acyl-PO(4)) from acyl-[acyl-carrier-protein] (acyl-ACP). This enzyme utilizes acyl-ACP as fatty acyl donor, but not acyl-CoA. The sequence is that of Phosphate acyltransferase from Lactiplantibacillus plantarum (strain ATCC BAA-793 / NCIMB 8826 / WCFS1) (Lactobacillus plantarum).